The sequence spans 479 residues: Ribosomal RNA small subunit methyltransferase F (479 aa).

Residues 125–131 (AAAPGSK), E149, D176, and D194 contribute to the S-adenosyl-L-methionine site. C247 (nucleophile) is an active-site residue.

The protein belongs to the class I-like SAM-binding methyltransferase superfamily. RsmB/NOP family.

It is found in the cytoplasm. The catalysed reaction is cytidine(1407) in 16S rRNA + S-adenosyl-L-methionine = 5-methylcytidine(1407) in 16S rRNA + S-adenosyl-L-homocysteine + H(+). Its function is as follows. Specifically methylates the cytosine at position 1407 (m5C1407) of 16S rRNA. This chain is Ribosomal RNA small subunit methyltransferase F, found in Shigella boydii serotype 18 (strain CDC 3083-94 / BS512).